The sequence spans 98 residues: Protein translation factor SUI1 homolog (98 aa).

The protein belongs to the SUI1 family.

The protein is Protein translation factor SUI1 homolog of Pyrococcus abyssi (strain GE5 / Orsay).